A 297-amino-acid polypeptide reads, in one-letter code: UBX domain-containing protein 1 (297 aa).

A2 is subject to N-acetylalanine. In terms of domain architecture, UBA spans 2–42; it reads AELTALESLIEMGFPKGRAEKALALTGNQGIEAAMDWLMEH. Residues 40–210 are disordered; that stretch reads MEHEDDPDVD…PSREPPTKRE (171 aa). The interval 43 to 297 is interaction with BRCA1; it reads EDDPDVDEPL…VLIVAKKCPG (255 aa). Composition is skewed to basic and acidic residues over residues 86 to 122 and 137 to 177; these read LTEE…ERER and RLQE…ERAK. Residues 86-176 are a coiled coil; it reads LTEEERQEQT…KIERDKAERA (91 aa). A compositionally biased stretch (pro residues) spans 187–199; that stretch reads PSPPATEPGPVPS. S199 bears the Phosphoserine mark. Position 200 is a phosphoserine; by MAPK12 (S200). Phosphothreonine is present on residues T207 and T229. The UBX domain occupies 209-291; that stretch reads REYDQCRIQV…GLVPSAVLIV (83 aa). The residue at position 270 (S270) is a Phosphoserine.

As to quaternary structure, component of a complex required to couple retrotranslocation, ubiquitination and deglycosylation composed of NGLY1, SAKS1, AMFR, VCP and RAD23B. Interacts with HOMER2. Interacts directly with VCP. Interacts with BRCA1 and BARD1; interaction takes place when BRCA1 is not autoubiquitinated bur is strongly enhanced in the presence of autoubiquitinated BRCA1.

It localises to the cytoplasm. In terms of biological role, ubiquitin-binding protein that interacts with the BRCA1-BARD1 heterodimer, and regulates its activity. Specifically binds 'Lys-6'-linked polyubiquitin chains. Interaction with autoubiquitinated BRCA1, leads to inhibit the E3 ubiquitin-protein ligase activity of the BRCA1-BARD1 heterodimer. Component of a complex required to couple deglycosylation and proteasome-mediated degradation of misfolded proteins in the endoplasmic reticulum that are retrotranslocated in the cytosol. The protein is UBX domain-containing protein 1 (UBXN1) of Bos taurus (Bovine).